We begin with the raw amino-acid sequence, 290 residues long: GTPase Era (290 aa).

One can recognise an Era-type G domain in the interval 2 to 169 (KSGFVSIIGR…KDKIYENLNE (168 aa)). The tract at residues 10 to 17 (GRPSTGKS) is G1. GTP is bound at residue 10–17 (GRPSTGKS). Residues 36 to 40 (QTTRN) form a G2 region. The G3 stretch occupies residues 57-60 (DTPG). GTP is bound by residues 57 to 61 (DTPGF) and 119 to 122 (NKID). The segment at 119 to 122 (NKID) is G4. Positions 148-150 (ISA) are G5. Residues 200–276 (LKEELPYSIY…NLFLQVKLRK (77 aa)) form the KH type-2 domain.

The protein belongs to the TRAFAC class TrmE-Era-EngA-EngB-Septin-like GTPase superfamily. Era GTPase family. As to quaternary structure, monomer.

It localises to the cytoplasm. It is found in the cell inner membrane. In terms of biological role, an essential GTPase that binds both GDP and GTP, with rapid nucleotide exchange. Plays a role in 16S rRNA processing and 30S ribosomal subunit biogenesis and possibly also in cell cycle regulation and energy metabolism. This chain is GTPase Era, found in Borrelia duttonii (strain Ly).